Here is a 269-residue protein sequence, read N- to C-terminus: 4-chlorobenzoyl coenzyme A dehalogenase (269 aa).

Residues Arg-24 and 62–67 (AGFYLR) contribute to the substrate site. His-90 serves as the catalytic Proton acceptor. Gly-114 serves as a coordination point for substrate. Asp-145 (nucleophile) is an active-site residue. Residue Arg-257 participates in substrate binding.

The protein belongs to the enoyl-CoA hydratase/isomerase family. In terms of assembly, homotetramer. Homotetramer, homooctamer and larger multimers. Homotrimer.

It catalyses the reaction 4-chlorobenzoyl-CoA + H2O = 4-hydroxybenzoyl-CoA + chloride + H(+). The protein operates within xenobiotic degradation; 4-chlorobenzoate degradation; 4-hydroxybenzoate from 4-chlorobenzoate: step 2/3. With respect to regulation, inactivated by 1 mM Ag(+) and by 5 mM Cu(2+). Partially inhibited by 5 mM Zn(2+), Mn(2+), Co(2+), Fe(2+) and Ni(2+). Unaffected by 10 mM Na(+), K(+) and Li(+) and by 0.5 mM Mg(2+), Mn(2+), Fe(2+), Ca(2+), Co(2+) and Zn(2+). Inhibited by the sulfhydryl blocking agent 5,5'-dithio-bis-(2-nitrobenzoate), SDS and N-bromosuccinimide. Unaffected by sodium azide and EDTA. Inactivated following treatment with diethyl pyrocarbonate; this inactivation is reversible by treatment with hydroxylamine. In terms of biological role, dehalogenates 4-chlorobenzoyl-CoA, 4-iodobenzoyl-CoA and 4-bromobenzoyl-CoA, but not 4-fluorobenzoyl-CoA. Inactive towards crotonyl-CoA, alpha-methylcrotonyl-CoA and beta-methylcrotonyl-CoA. This chain is 4-chlorobenzoyl coenzyme A dehalogenase, found in Pseudomonas sp. (strain CBS-3).